The primary structure comprises 336 residues: MAFNIHNRNLLSLEHHTTRELRYLLDLSRDLKRAKYTGTEQQHLKGNNIALIFEKTSTRTRCAFEVAAYDQGANVTYIDPNSSQIGHKESMKDTARVLGRMYDAIEYRGFKQEIVEELAKFAGVPVFNGLTDEYHPTQMIADVLTMREHSDKPLHDISYAYLGDARNNMGNSLLLIGAKLGMDVRIAAPKALWPHDDLVERCKQYAEESGARITLTEDPKAAVKGVDFVHTDVWVSMGEPIEAWGERIKQLKPYQVNAELMKSTGNPRTKFMHCLPAFHNSETKVGKQIAEQYPDLANGIEVTDDVFESPACIAFEQAENRMHTIKAILVSTLADL.

Residues serine 57 to threonine 60, glutamine 84, arginine 108, and histidine 135 to glutamine 138 contribute to the carbamoyl phosphate site. Residues asparagine 168, aspartate 232, and serine 236–methionine 237 each bind L-ornithine. Carbamoyl phosphate is bound by residues cysteine 274–leucine 275 and arginine 321.

Belongs to the aspartate/ornithine carbamoyltransferase superfamily. OTCase family.

Its subcellular location is the cytoplasm. It catalyses the reaction carbamoyl phosphate + L-ornithine = L-citrulline + phosphate + H(+). Its pathway is amino-acid degradation; L-arginine degradation via ADI pathway; carbamoyl phosphate from L-arginine: step 2/2. Functionally, reversibly catalyzes the transfer of the carbamoyl group from carbamoyl phosphate (CP) to the N(epsilon) atom of ornithine (ORN) to produce L-citrulline. This chain is Ornithine carbamoyltransferase, catabolic (arcB), found in Pseudomonas putida (strain ATCC 47054 / DSM 6125 / CFBP 8728 / NCIMB 11950 / KT2440).